The sequence spans 270 residues: ATP synthase subunit a (270 aa).

A run of 6 helical transmembrane segments spans residues 27–47 (FWTFHVDTLAWSVVLGLVFIL), 90–110 (IAPLALTIFVWVLLMNLMDLI), 147–166 (VNMTFALSLGVFALMIFYSV), 182–202 (PFNTPWLYWFNFILELVSLIA), 211–231 (LFGNLYAGELIFILIAGTLGV), and 238–258 (FLWAAFHLLVIPLQAFIFMML).

This sequence belongs to the ATPase A chain family. In terms of assembly, F-type ATPases have 2 components, CF(1) - the catalytic core - and CF(0) - the membrane proton channel. CF(1) has five subunits: alpha(3), beta(3), gamma(1), delta(1), epsilon(1). CF(0) has three main subunits: a(1), b(2) and c(9-12). The alpha and beta chains form an alternating ring which encloses part of the gamma chain. CF(1) is attached to CF(0) by a central stalk formed by the gamma and epsilon chains, while a peripheral stalk is formed by the delta and b chains.

Its subcellular location is the cell inner membrane. Key component of the proton channel; it plays a direct role in the translocation of protons across the membrane. This Pseudoalteromonas atlantica (strain T6c / ATCC BAA-1087) protein is ATP synthase subunit a.